Consider the following 231-residue polypeptide: 7-cyano-7-deazaguanine synthase (231 aa).

17–27 (FSGGMDSFTLL) contacts ATP. 4 residues coordinate Zn(2+): Cys193, Cys201, Cys204, and Cys207.

It belongs to the QueC family. It depends on Zn(2+) as a cofactor.

It catalyses the reaction 7-carboxy-7-deazaguanine + NH4(+) + ATP = 7-cyano-7-deazaguanine + ADP + phosphate + H2O + H(+). It functions in the pathway purine metabolism; 7-cyano-7-deazaguanine biosynthesis. Functionally, catalyzes the ATP-dependent conversion of 7-carboxy-7-deazaguanine (CDG) to 7-cyano-7-deazaguanine (preQ(0)). The sequence is that of 7-cyano-7-deazaguanine synthase from Hahella chejuensis (strain KCTC 2396).